The primary structure comprises 368 residues: 2-aminoethylphosphonate--pyruvate transaminase (368 aa).

Residue Lys-192 is modified to N6-(pyridoxal phosphate)lysine.

This sequence belongs to the class-V pyridoxal-phosphate-dependent aminotransferase family. PhnW subfamily. In terms of assembly, homodimer. The cofactor is pyridoxal 5'-phosphate.

It carries out the reaction (2-aminoethyl)phosphonate + pyruvate = phosphonoacetaldehyde + L-alanine. Its function is as follows. Involved in phosphonate degradation. The chain is 2-aminoethylphosphonate--pyruvate transaminase from Pseudomonas entomophila (strain L48).